The following is a 965-amino-acid chain: Argonaute protein wago-4 (965 aa).

The tract at residues 1–34 is disordered; sequence MPALPPVYTPSGAPSSVHAPPAVPPVPVPTQPLR. Over residues 10 to 20 the composition is skewed to low complexity; sequence PSGAPSSVHAP. Residues 21 to 30 are compositionally biased toward pro residues; the sequence is PAVPPVPVPT. The PAZ domain maps to 318–428; that stretch reads PILDKLKEIT…YPMELLKISS (111 aa). Residues 594–924 enclose the Piwi domain; it reads TFVFIITDDS…YAKRGRNLWN (331 aa).

Belongs to the argonaute family. WAGO subfamily. Interacts with znfx-1; the interaction promotes the transmission of epigenetic information across generations. May interact with mina-1. As to expression, expressed in the hermaphrodite germline and in oocytes. Expressed at a low level in the male germline. Not expressed in the soma of hermaphrodites or males.

The protein resides in the cytoplasm. The protein localises to the perinuclear region. It localises to the cytoplasmic granule. In terms of biological role, argonaute protein which is involved in the endogenous small interfering RNA (endo-siRNA) pathway and is required for RNA-mediated gene silencing (RNAi) in the germline. Interacts with secondary 22G-RNAs, which are RNA-dependent RNA polymerase-derived endo-siRNAs, typically 22 nucleotides in length with a 5'guanosine residue. Also interacts with the mRNA targets of 22G-RNAs. Associates with znfx-1 to mediate small RNA-directed transgenerational epigenetic inheritance of both germline- and soma-expressed genes. This chain is Argonaute protein wago-4, found in Caenorhabditis elegans.